Reading from the N-terminus, the 550-residue chain is Chaperonin GroEL (550 aa).

ATP contacts are provided by residues 30–33 (TLGP), Lys-51, 87–91 (DGTTT), Gly-415, 479–481 (NAA), and Asp-495. The interval 526-550 (KDEKSDLGNSSAPSAGGMGGMGGMM) is disordered. Positions 541–550 (GGMGGMGGMM) are enriched in gly residues.

The protein belongs to the chaperonin (HSP60) family. Forms a cylinder of 14 subunits composed of two heptameric rings stacked back-to-back. Interacts with the co-chaperonin GroES.

It is found in the cytoplasm. It carries out the reaction ATP + H2O + a folded polypeptide = ADP + phosphate + an unfolded polypeptide.. Functionally, together with its co-chaperonin GroES, plays an essential role in assisting protein folding. The GroEL-GroES system forms a nano-cage that allows encapsulation of the non-native substrate proteins and provides a physical environment optimized to promote and accelerate protein folding. The polypeptide is Chaperonin GroEL (Buchnera aphidicola subsp. Baizongia pistaciae (strain Bp)).